The primary structure comprises 89 residues: Phytosulfokines 1 (89 aa).

An N-terminal signal peptide occupies residues 1–22; sequence MVNPGRTARALCLLCLALLLLG. Positions 23 to 79 are excised as a propeptide; sequence QDTHSRKLLLQEKHSHGVGNGTTTTQEPSRENGGSTGSNNNGQLQFDSAKWEEFHTD. Residues 33 to 70 are disordered; sequence QEKHSHGVGNGTTTTQEPSRENGGSTGSNNNGQLQFDS. Residue N42 is glycosylated (N-linked (GlcNAc...) asparagine). A sulfotyrosine mark is found at Y80 and Y82. The propeptide occupies 85–89; it reads DVKKP.

This sequence belongs to the phytosulfokine family. Post-translationally, sulfation is important for activity and for the binding to a putative membrane receptor. In terms of processing, PSK-alpha is produced by endopeptidase digestion. PSK-beta is produced from PSK-alpha by exopeptidase digestion. As to expression, expressed throughout the seedling. More abundant in fragments containing shoot or root apexes where cells proliferate vigorously.

The protein resides in the secreted. In terms of biological role, promotes plant cell differentiation, organogenesis and somatic embryogenesis as well as cell proliferation. In Oryza sativa subsp. japonica (Rice), this protein is Phytosulfokines 1 (PSK1).